The following is a 269-amino-acid chain: dITP/XTP pyrophosphatase (269 aa).

22-27 (SNNAHK) lines the substrate pocket. The Proton acceptor role is filled by D82. A Mg(2+)-binding site is contributed by D82. Residues S83, 165–168 (FGYD), K188, and 193–194 (HR) contribute to the substrate site.

It belongs to the HAM1 NTPase family. In terms of assembly, homodimer. Mg(2+) serves as cofactor.

The enzyme catalyses XTP + H2O = XMP + diphosphate + H(+). It carries out the reaction dITP + H2O = dIMP + diphosphate + H(+). It catalyses the reaction ITP + H2O = IMP + diphosphate + H(+). Functionally, pyrophosphatase that catalyzes the hydrolysis of nucleoside triphosphates to their monophosphate derivatives, with a high preference for the non-canonical purine nucleotides XTP (xanthosine triphosphate), dITP (deoxyinosine triphosphate) and ITP. Seems to function as a house-cleaning enzyme that removes non-canonical purine nucleotides from the nucleotide pool, thus preventing their incorporation into DNA/RNA and avoiding chromosomal lesions. The protein is dITP/XTP pyrophosphatase of Treponema pallidum (strain Nichols).